The following is a 175-amino-acid chain: Adenylate kinase isoenzyme 6 homolog (175 aa).

Gly17, Gly19, Lys20, Thr21, and Ser22 together coordinate ATP. The NMPbind stretch occupies residues 37–60 (DISSAVKEKELHDGWDSEFQCYIL). The interval 112 to 122 (KRNYNQHKITN) is LID. Residue Arg113 participates in ATP binding.

Belongs to the adenylate kinase family. AK6 subfamily. Monomer and homodimer. Interacts with small ribosomal subunit protein uS11. Not a structural component of 43S pre-ribosomes, but transiently interacts with them by binding to uS11.

The protein resides in the cytoplasm. It localises to the nucleus. It carries out the reaction AMP + ATP = 2 ADP. The catalysed reaction is ATP + H2O = ADP + phosphate + H(+). Broad-specificity nucleoside monophosphate (NMP) kinase that catalyzes the reversible transfer of the terminal phosphate group between nucleoside triphosphates and monophosphates. Also has ATPase activity. Involved in the late cytoplasmic maturation steps of the 40S ribosomal particles, specifically 18S rRNA maturation. While NMP activity is not required for ribosome maturation, ATPase activity is. Associates transiently with small ribosomal subunit protein uS11. ATP hydrolysis breaks the interaction with uS11. May temporarily remove uS11 from the ribosome to enable a conformational change of the ribosomal RNA that is needed for the final maturation step of the small ribosomal subunit. Its NMP activity may have a role in nuclear energy homeostasis. The protein is Adenylate kinase isoenzyme 6 homolog of Dictyostelium discoideum (Social amoeba).